A 141-amino-acid polypeptide reads, in one-letter code: Large ribosomal subunit protein uL11 (141 aa).

The protein belongs to the universal ribosomal protein uL11 family. As to quaternary structure, part of the ribosomal stalk of the 50S ribosomal subunit. Interacts with L10 and the large rRNA to form the base of the stalk. L10 forms an elongated spine to which L12 dimers bind in a sequential fashion forming a multimeric L10(L12)X complex. One or more lysine residues are methylated.

In terms of biological role, forms part of the ribosomal stalk which helps the ribosome interact with GTP-bound translation factors. In Synechococcus sp. (strain CC9902), this protein is Large ribosomal subunit protein uL11.